The sequence spans 295 residues: Alpha-soluble NSF attachment protein (295 aa).

N-acetylmethionine is present on M1. Phosphoserine occurs at positions 26, 29, and 195.

The protein belongs to the SNAP family. Interacts with PRKCABP, and disrupts the interaction between GRIA2 and PRKCABP, leading to the internalization of GRIA2. Found in a complex with VAMP8. Component of a SNARE-like complex that contains at least ZW10, USE1L, RINT1, STX18 and NAPA/SNAP-alpha. Interacts with VTI1A. Interacts with STX12. Interacts with GNA12 (via N-terminus); the interaction promotes CDH5 localization to plasma membrane.

The protein localises to the cell membrane. Required for vesicular transport between the endoplasmic reticulum and the Golgi apparatus. Together with GNA12 promotes CDH5 localization to plasma membrane. This is Alpha-soluble NSF attachment protein (Napa) from Mus musculus (Mouse).